A 251-amino-acid chain; its full sequence is Capsid protein (251 aa).

Residues 1–27 form a disordered region; that stretch reads MPKRDLPWRSMPGTSKTSRNANYSPRA. The Bipartite nuclear localization signal signature appears at 3–20; sequence KRDLPWRSMPGTSKTSRN. Polar residues predominate over residues 12 to 23; sequence PGTSKTSRNANY. Residues 35 to 49 carry the Nuclear localization signal motif; the sequence is KASEWVHRPMYRKPR. A zinc finger lies at 63–80; it reads CEGPCKVQSYEQRHDISH. The Nuclear export signal signature appears at 96 to 117; it reads ITHRVGKRFCVKSVYILGKIWM. The Bipartite nuclear localization signal signature appears at 195–242; it reads KRFWKVNNHVVYNHQEAGKYENHTENALLLYMACTHASNPVYATLKIR.

It belongs to the geminiviridae capsid protein family. As to quaternary structure, homomultimer. Binds to single-stranded and double-stranded viral DNA. Interacts (via nuclear localization signals) with host importin alpha-1a.

The protein localises to the virion. The protein resides in the host nucleus. In terms of biological role, encapsidates the viral DNA into characteristic twinned ('geminate') particles. Binds the genomic viral ssDNA and shuttles it into and out of the cell nucleus. The CP of bipartite geminiviruses is not required for cell-to-cell or systemic movement. This chain is Capsid protein, found in Abutilon (Upland cotton).